The sequence spans 2282 residues: MKGHQFKSWIFELREILREIKNSHYFLDSWTQFNSVGSFIHIFFHQERFIKLLDPRIWSILLSRNSQGSTSNRYFTIKCVVLFVVAILIYRINNRNMVERKNLYLTGLLPIPMNSIGPRTDTLEESFGSSNINRLIVSLLYLPKGKKISESFFLDPKESTWVLPITKRCIMPESNWGSRWWRNWLGKKRDSSCKISNETVAGIEISFKEKDLKYLEFLFVYYMDDPIRKDHDWELFDRLSPSKRRNIINLNSGHLFEILVKDWICYLMFAFREKIPIEVGGFLKQQGAGSTIQSNDIERFSHLFLRNKWAISLQNCAQFHMWQFRQDLFVSWGKNPHESDFLRNIARENWIWLDNVWLVNKDRFFTKVRNVSSNIQYDSTRSSFVQVTDSSQLKGSSDQSRDHFDSISNEDSEYHTLINQREIQQLKERSILWDPSFLQAERREIESDRFPKCLSGYSSMSRLFTERERQMNKHLLPEEIEEFLGNPARSIRSFFSDRWSELHLGSNPTERSTRDQKLLKKEEDVSFVPSRRSENKEIVNIFKIITYLQNTVSIHPISSDPGCDMVPKDELDMDSSNKISFLNKNPFFDLFHLFHDRNRGGSTLHHDFESEERFQEMADLFTLSITEPDLVYHKGFAFSIFSYGLEQKQFLNEVFNSRNESKKKSLLVLPPIFYEENESFYRRIRKKWVRISCGNDLEDPKPKIVVFASNNIMEAVNQSRLIRNRIQIQYSTYGYIRNVLNRFFLMNRSDRNFEYGIHRDQIGNDTLNHRTIMKYTINQHLSNLKKSQKKWFAPLILISRTERFMNRDPNAYRYKWSNGSKNFQEHLKHFVSEQKSRFQVVFDRLRINQYSIDWSEVIDKKDLSKPLPFFLSKFLFFLSNSLPFFFVSFGNIPIHRSEIHIYELKGPNDQLCNQLLESIGLQIVHLKKLKPFLLDDHNTSQKSKFLINGGRISPFLFNKIPKWMIDSFHTRKNRRKSFDNTDSYFSMISHDQDNWLNPVKPFHRSSLISSFYKANRLRFLNNPHRFRFYCNKRFTFYVEKVRINNYDFTYGQFLNILFIRNKIFSLCGGKKKHAFLERDTISPIESQVSNIFIPNDFPQSGDERYNLYKFFPFPIRSDLLVRRAIYSIAAISGTPLTEGQIVNFERTYCQPLSDMNRSDSDEKNLHQYLNFNSNMGLIHTPCSEKYLPSEKRKRKKRSLCLKKCVEKGQMSRTFQRDSAFSTLSKWNRFQTYMPWFLTSTGYKYLNLIFLDTFSDLLPVLSSSQKFVSIFHDIMHGSDRAWRILQKKWCLPQWNLISEISSKCFHNLLLSEEMIHRNNESPLISTHLRSPNAREFLYSILFLLLVAGYLVHTHLLFVSRAYSELETEFERVKSLMIPPYMIELRKLLDRYPTSELNSFWLKNLFLVALEQLGDSLEEIRGSAFGGNMLWGGGPADGVKSIRSKTKDLNINLVDITDLISIIPNPINRITFSRNTRHLSHTSKEIYSLIRKRKKGNGDWIDDKIESWVANSDSIDDKEREFLVQFSTLTLTTEKRIDQILSSLTHSDHLSKNDSGYQMIEQPGTIYLRYLVDIHKKHFMNYEFNTYCLAERRIFLAHYQTITYSQTSCGANSFHFPSHGKPFSLRLALSPSRGILVIGSIGTGRSYLVKYLAANSYVPFITVFLNKFLDNKPKGFLIDDIDDASDDIDASDDIDRDLDTELELLTMMNALTIDMMSEIGRFYITLQFELAKAMSPCIIWIPNIHDLDVNESNYLSLGLLVNYLSRDCERCSTRNILVIASTHIPQKVDPALIAPNKLNTCIKIRRLLIPQQRKHFFTLSYTRGFHLEKKMFHTNGFGSITMGSNARDLVALTNEALSISITQKKSIIDTNTIRSALHRQTWDLRSQVRSVQDHGILFYQIGRAVAQNVLLSNCPIDPISIYMKKKSCNEGDSYLYKWYFELGTSMKKLTILLYLLSCSAGSVAQDLWSLPGPDEKNGITSSGLVENDSDLVHGLLEVEGALVGSSRTEKDCSRFDNDRVTLLLRPEPRNPLDMMQKGSCSIVDQRFLYEKYESEFEEGEGEGVLDPQQIEEDLFNHIVWAPRIWRPWGFLFDCIERPNELGFPYRAGSFRGKRIIYDEKDELQENDSEFLQSRTMQYQTRDRSSNEQGFFRISQFIWEPADPLFFLFKDQPLVSVFSHREFFADEEMSKGLLTSQPDPPTSIYKRWFIKNTQEKHFELLIHRQRWLRTNSSLSNGFFRSNTPSESYQYLSNLFLSNGTLLDQMTKTLLRKRWLFPDEMKIGFM.

1637–1644 contributes to the ATP binding site; it reads GSIGTGRS.

This sequence belongs to the Ycf2 family.

It is found in the plastid. The protein localises to the chloroplast stroma. Probable ATPase of unknown function. Its presence in a non-photosynthetic plant (Epifagus virginiana) and experiments in tobacco indicate that it has an essential function which is probably not related to photosynthesis. This Citrus sinensis (Sweet orange) protein is Protein Ycf2.